The following is a 240-amino-acid chain: Manganese transport system ATP-binding protein MntB (240 aa).

An ABC transporter domain is found at 1–233 (MNIQGLTIAY…KIQFAYGDAP (233 aa)). Residue 33-40 (GPNGAGKS) coordinates ATP.

Belongs to the ABC transporter superfamily.

It localises to the cell membrane. This protein is probably a component of a manganese permease, a binding protein-dependent, ATP-driven transport system. Probably responsible for energy coupling to the transport system. In Listeria innocua serovar 6a (strain ATCC BAA-680 / CLIP 11262), this protein is Manganese transport system ATP-binding protein MntB (mntB).